We begin with the raw amino-acid sequence, 345 residues long: Splicing factor YJU2 (345 aa).

The Zn(2+) site is built by C43, C46, C80, and C83. The segment at 205–345 is disordered; that stretch reads KRLRDSDSEE…YSDSDDSSSD (141 aa). The segment covering 217-232 has biased composition (basic and acidic residues); sequence ENAKERSKKHIADKPT. Composition is skewed to low complexity over residues 308 to 317 and 327 to 337; these read SSITSSSASS and GSSLGLLGAYS.

Belongs to the CWC16 family. YJU2 subfamily. As to quaternary structure, component of the spliceosome. Present in the activated B complex, the catalytically activated B* complex which catalyzes the branching, the catalytic step 1 C complex catalyzing the exon ligation, and the postcatalytic P complex containing the ligated exons (mRNA) and the excised lariat intron.

Its subcellular location is the nucleus. Part of the spliceosome which catalyzes two sequential transesterification reactions, first the excision of the non-coding intron from pre-mRNA and then the ligation of the coding exons to form the mature mRNA. Plays a role in stabilizing the structure of the spliceosome catalytic core and docking of the branch helix into the active site, producing 5'-exon and lariat intron-3'-intermediates. May protect cells from TP53-dependent apoptosis upon dsDNA break damage through association with PRP19-CD5L complex. This is Splicing factor YJU2 from Danio rerio (Zebrafish).